A 97-amino-acid polypeptide reads, in one-letter code: YcgL domain-containing protein PputGB1_4120 (97 aa).

Positions 3–87 constitute a YcgL domain; it reads RICSIYKSPR…AEDEYIEHLP (85 aa).

The polypeptide is YcgL domain-containing protein PputGB1_4120 (Pseudomonas putida (strain GB-1)).